We begin with the raw amino-acid sequence, 213 residues long: Lysozyme g-like protein 2 (213 aa).

An N-terminal signal peptide occupies residues 1-19; that stretch reads MVPSVVFWGLIALVGTAKG. Intrachain disulfides connect Cys40–Cys93 and Cys54–Cys62. Residue Glu106 is part of the active site.

The protein belongs to the glycosyl hydrolase 23 family.

It is found in the secreted. Functionally, may act as a potent antibacterial protein that may play a role in the innate immunity. This Mus musculus (Mouse) protein is Lysozyme g-like protein 2 (Lyg2).